A 285-amino-acid chain; its full sequence is Probable enoyl-CoA hydratase echA12 (285 aa).

The protein belongs to the enoyl-CoA hydratase/isomerase family.

It carries out the reaction a (3S)-3-hydroxyacyl-CoA = a (2E)-enoyl-CoA + H2O. The enzyme catalyses a 4-saturated-(3S)-3-hydroxyacyl-CoA = a (3E)-enoyl-CoA + H2O. Functionally, could possibly oxidize fatty acids using specific components. This is Probable enoyl-CoA hydratase echA12 (echA12) from Mycobacterium tuberculosis (strain CDC 1551 / Oshkosh).